A 356-amino-acid chain; its full sequence is Tetraacyldisaccharide 4'-kinase (356 aa).

51-58 serves as a coordination point for ATP; it reads GWGGSGKT.

This sequence belongs to the LpxK family.

It catalyses the reaction a lipid A disaccharide + ATP = a lipid IVA + ADP + H(+). The protein operates within glycolipid biosynthesis; lipid IV(A) biosynthesis; lipid IV(A) from (3R)-3-hydroxytetradecanoyl-[acyl-carrier-protein] and UDP-N-acetyl-alpha-D-glucosamine: step 6/6. In terms of biological role, transfers the gamma-phosphate of ATP to the 4'-position of a tetraacyldisaccharide 1-phosphate intermediate (termed DS-1-P) to form tetraacyldisaccharide 1,4'-bis-phosphate (lipid IVA). The protein is Tetraacyldisaccharide 4'-kinase of Oleidesulfovibrio alaskensis (strain ATCC BAA-1058 / DSM 17464 / G20) (Desulfovibrio alaskensis).